Reading from the N-terminus, the 276-residue chain is Ribosomal RNA small subunit methyltransferase A (276 aa).

The S-adenosyl-L-methionine site is built by Asn19, Leu21, Gly46, Glu71, Asp94, and Asn117.

Belongs to the class I-like SAM-binding methyltransferase superfamily. rRNA adenine N(6)-methyltransferase family. RsmA subfamily.

The protein localises to the cytoplasm. It catalyses the reaction adenosine(1518)/adenosine(1519) in 16S rRNA + 4 S-adenosyl-L-methionine = N(6)-dimethyladenosine(1518)/N(6)-dimethyladenosine(1519) in 16S rRNA + 4 S-adenosyl-L-homocysteine + 4 H(+). Its function is as follows. Specifically dimethylates two adjacent adenosines (A1518 and A1519) in the loop of a conserved hairpin near the 3'-end of 16S rRNA in the 30S particle. May play a critical role in biogenesis of 30S subunits. The chain is Ribosomal RNA small subunit methyltransferase A from Burkholderia ambifaria (strain ATCC BAA-244 / DSM 16087 / CCUG 44356 / LMG 19182 / AMMD) (Burkholderia cepacia (strain AMMD)).